A 687-amino-acid chain; its full sequence is Probable ATP-dependent RNA helicase Dbp73D (687 aa).

Disordered regions lie at residues 1–26 (MELF…TNNE) and 52–87 (TPIL…EEDV). Basic and acidic residues-rich tracts occupy residues 9-18 (YTEDLKEQKD) and 54-79 (ILEK…EKPL). A Q motif motif is present at residues 160–168 (LFPVQKQVI). Residues 177 to 381 (KPPPFRPRDI…DLRLFQPRLF (205 aa)) enclose the Helicase ATP-binding domain. Residue 190-197 (APTGSGKT) participates in ATP binding. Residues 305 to 308 (DEAD) carry the DEAD box motif. The region spanning 434–583 (TVFALVEKYK…EIHVSPDIEI (150 aa)) is the Helicase C-terminal domain. A disordered region spans residues 646 to 675 (IVQSSKKSSETKNSKTKADKTKYQPKETKK). Basic and acidic residues predominate over residues 652–675 (KSSETKNSKTKADKTKYQPKETKK).

It belongs to the DEAD box helicase family. DDX51/DBP6 subfamily. As to expression, expressed in the germline tissue of the ovary.

It is found in the nucleus. It localises to the nucleolus. The catalysed reaction is ATP + H2O = ADP + phosphate + H(+). Its function is as follows. ATP-binding RNA helicase involved in the biogenesis of 60S ribosomal subunits. This Drosophila melanogaster (Fruit fly) protein is Probable ATP-dependent RNA helicase Dbp73D (Dbp73D).